The following is a 465-amino-acid chain: UDP-N-acetylmuramate--L-alanine ligase (465 aa).

Position 112–118 (112–118 (GTHGKTT)) interacts with ATP.

The protein belongs to the MurCDEF family.

The protein localises to the cytoplasm. The catalysed reaction is UDP-N-acetyl-alpha-D-muramate + L-alanine + ATP = UDP-N-acetyl-alpha-D-muramoyl-L-alanine + ADP + phosphate + H(+). The protein operates within cell wall biogenesis; peptidoglycan biosynthesis. Cell wall formation. This is UDP-N-acetylmuramate--L-alanine ligase from Burkholderia multivorans (strain ATCC 17616 / 249).